Reading from the N-terminus, the 281-residue chain is Glyoxalase 1 (281 aa).

2 consecutive VOC domains span residues 4–127 (RALH…IGKA) and 132–251 (KVLR…FVGD).

This sequence belongs to the glyoxalase I family.

In terms of biological role, thought to act as a glyoxalase. May remove methylglyoxal from mitochondrial proteins. Has roles in reducing oxidative stress and increasing lifespan. This chain is Glyoxalase 1, found in Caenorhabditis briggsae.